The primary structure comprises 331 residues: Ketol-acid reductoisomerase (NADP(+)) (331 aa).

Residues 2–182 form the KARI N-terminal Rossmann domain; sequence AKLFYDSDAD…GGTRAGILET (181 aa). NADP(+) is bound by residues 25-28, Ser-51, Ser-53, and 83-86; these read YGSQ and DEFQ. Residue His-108 is part of the active site. An NADP(+)-binding site is contributed by Gly-134. The KARI C-terminal knotted domain maps to 183–328; that stretch reads NFKEETETDL…KTLRSMFSWL (146 aa). Mg(2+) is bound by residues Asp-191, Glu-195, Glu-227, and Glu-231. Residue Ser-252 coordinates substrate.

It belongs to the ketol-acid reductoisomerase family. Requires Mg(2+) as cofactor.

It catalyses the reaction (2R)-2,3-dihydroxy-3-methylbutanoate + NADP(+) = (2S)-2-acetolactate + NADPH + H(+). The catalysed reaction is (2R,3R)-2,3-dihydroxy-3-methylpentanoate + NADP(+) = (S)-2-ethyl-2-hydroxy-3-oxobutanoate + NADPH + H(+). Its pathway is amino-acid biosynthesis; L-isoleucine biosynthesis; L-isoleucine from 2-oxobutanoate: step 2/4. The protein operates within amino-acid biosynthesis; L-valine biosynthesis; L-valine from pyruvate: step 2/4. Its function is as follows. Involved in the biosynthesis of branched-chain amino acids (BCAA). Catalyzes an alkyl-migration followed by a ketol-acid reduction of (S)-2-acetolactate (S2AL) to yield (R)-2,3-dihydroxy-isovalerate. In the isomerase reaction, S2AL is rearranged via a Mg-dependent methyl migration to produce 3-hydroxy-3-methyl-2-ketobutyrate (HMKB). In the reductase reaction, this 2-ketoacid undergoes a metal-dependent reduction by NADPH to yield (R)-2,3-dihydroxy-isovalerate. This Prochlorococcus marinus (strain NATL1A) protein is Ketol-acid reductoisomerase (NADP(+)).